The sequence spans 299 residues: HTH-type transcriptional regulator PgrR (299 aa).

The HTH lysR-type domain occupies 4–61; the sequence is EEIADLMAFVVVAEERSFTRAAARLSMAQSALSQIVRRIEERLGLRLLTRTTRSVVPT. The H-T-H motif DNA-binding region spans 21-40; sequence FTRAAARLSMAQSALSQIVR.

The protein belongs to the LysR transcriptional regulatory family.

Its function is as follows. Regulates the expression of genes involved in peptidoglycan (PG) degradation. Could play a role in switch control between recycling and degradation of PG peptides. Negatively regulates the expression of the ycjY-ymjD-ymjC-mpaA operon by binding to the PgrR-box. In addition, other genes are predicted to be under the control of PgrR, including genes related to membrane formation and function. This Escherichia coli (strain K12) protein is HTH-type transcriptional regulator PgrR (pgrR).